Here is a 327-residue protein sequence, read N- to C-terminus: Methionyl-tRNA formyltransferase (327 aa).

A (6S)-5,6,7,8-tetrahydrofolate-binding site is contributed by 121 to 124; that stretch reads SLLP.

The protein belongs to the Fmt family.

The catalysed reaction is L-methionyl-tRNA(fMet) + (6R)-10-formyltetrahydrofolate = N-formyl-L-methionyl-tRNA(fMet) + (6S)-5,6,7,8-tetrahydrofolate + H(+). Attaches a formyl group to the free amino group of methionyl-tRNA(fMet). The formyl group appears to play a dual role in the initiator identity of N-formylmethionyl-tRNA by promoting its recognition by IF2 and preventing the misappropriation of this tRNA by the elongation apparatus. This Burkholderia pseudomallei (strain K96243) protein is Methionyl-tRNA formyltransferase.